Reading from the N-terminus, the 458-residue chain is Acetyl-CoA decarbonylase/synthase complex subunit gamma (458 aa).

The region spanning 1–59 (MQVTAMDVYRLLPKTNCGKCNEASCMAFATKLIEKEVTLDDCPQLSGDERQKLENLLAP) is the 4Fe-4S domain. The [4Fe-4S] cluster site is built by C17, C20, C25, and C42.

Heterodimer of delta and gamma chains. The ACDS complex is made up of alpha, epsilon, beta, gamma and delta chains with a probable stoichiometry of (alpha(2)epsilon(2))(4)-beta(8)-(gamma(1)delta(1))(8). The cofactor is corrinoid. [4Fe-4S] cluster is required as a cofactor.

It carries out the reaction 5,6,7,8-tetrahydrosarcinapterin + methyl-Co(III)-[corrinoid Fe-S protein] = 5-methyltetrahydrosarcinapterin + Co(I)-[corrinoid Fe-S protein] + H(+). Its function is as follows. Part of a complex that catalyzes the reversible cleavage of acetyl-CoA, allowing autotrophic growth from CO(2). The polypeptide is Acetyl-CoA decarbonylase/synthase complex subunit gamma (Methanothermobacter thermautotrophicus (strain ATCC 29096 / DSM 1053 / JCM 10044 / NBRC 100330 / Delta H) (Methanobacterium thermoautotrophicum)).